A 1623-amino-acid polypeptide reads, in one-letter code: RING finger protein 17 (1623 aa).

Positions 1–22 (MAAEASKTGPSRSSYQRMGRKS) are disordered. The RING-type zinc finger occupies 32 to 75 (CTRCGRRVSRSSGHHCELQCGHAFCELCLLMTEECTTIICPDCE). Lys-234 bears the N6-acetyllysine mark. 3 Tudor domains span residues 726–784 (CPVQ…FLNA), 962–1021 (KWEN…LKTM), and 1228–1285 (FWKK…PDIP). Residues 1438-1462 (NQSNQHSDTDDSGVSGESESESLDE) form a disordered region. Residues 1479-1539 (DFRTEMPCLA…CQIPSHLMRY (61 aa)) enclose the Tudor 4 domain.

In terms of assembly, interacts with MXD1, MXD3, MXD4, MXI1 and PIWIL1. Self-associates. Testis specific.

Its subcellular location is the cytoplasm. It localises to the nucleus. Functionally, seems to be involved in regulation of transcriptional activity of MYC. In vitro, inhibits DNA-binding activity of Mad-MAX heterodimers. Can recruit Mad transcriptional repressors (MXD1, MXD3, MXD4 and MXI1) to the cytoplasm. May be involved in spermiogenesis. This chain is RING finger protein 17 (RNF17), found in Homo sapiens (Human).